A 129-amino-acid chain; its full sequence is Small ribosomal subunit protein uS11 (129 aa).

Belongs to the universal ribosomal protein uS11 family. In terms of assembly, part of the 30S ribosomal subunit. Interacts with proteins S7 and S18. Binds to IF-3.

In terms of biological role, located on the platform of the 30S subunit, it bridges several disparate RNA helices of the 16S rRNA. Forms part of the Shine-Dalgarno cleft in the 70S ribosome. This chain is Small ribosomal subunit protein uS11, found in Serratia proteamaculans (strain 568).